Consider the following 506-residue polypeptide: MTTEDQTISSSGGYVQSSSTTDHVDHHHHDQHESLNPPLVKKKRNLPGNPDPEAEVIALSPKTLMATNRFLCEICGKGFQRDQNLQLHRRGHNLPWKLKQRTSKEVRKRVYVCPEKSCVHHHPTRALGDLTGIKKHFCRKHGEKKWKCEKCAKRYAVQSDWKAHSKTCGTREYRCDCGTIFSRRDSFITHRAFCDALAEETARLNAASHLKSFAATAGSNLNYHYLMGTLIPSPSLPQPPSFPFGPPQPQHHHHHQFPITTNNFDHQDVMKPASTLSLWSGGNINHHQQVTIEDRMAPQPHSPQEDYNWVFGNANNHGELITTSDSLITHDNNINIVQSKENANGATSLSVPSLFSSVDQITQDANAASVAVANMSATALLQKAAQMGATSSTSPTTTITTDQSAYLQSFASKSNQIVEDGGSDRFFASFGSNSVELMSNNNNGLHEIGNPRNGVTVVSGMGELQNYPWKRRRVDIGNAGGGGQTRDFLGVGVQTICHSSSINGWI.

Positions 1 to 53 are disordered; that stretch reads MTTEDQTISSSGGYVQSSSTTDHVDHHHHDQHESLNPPLVKKKRNLPGNPDPE. Positions 9–21 are enriched in low complexity; that stretch reads SSSGGYVQSSSTT. Positions 22–33 are enriched in basic and acidic residues; the sequence is DHVDHHHHDQHE. Ser60 is modified (phosphoserine). C2H2-type zinc fingers lie at residues 70–92 and 111–141; these read FLCE…RRGH and YVCP…CRKH. Residues 133–140 carry the Nuclear localization signal motif; sequence IKKHFCRK. The C2H2-type 2; degenerate zinc-finger motif lies at 146-169; that stretch reads WKCEKCAKRYAVQSDWKAHSKTCG. Residues Cys148, Cys151, His164, Cys168, Cys175, Cys177, His190, and Cys194 each contribute to the Zn(2+) site. Residues 173-196 form a CCHC-type 2; atypical zinc finger; sequence YRCDCGTIFSRRDSFITHRAFCDA. Positions 183–195 are SHR-binding; it reads RRDSFITHRAFCD.

As to quaternary structure, interacts with SHR, SCR and JKD, but not with itself. Interacts with SIEL. Binds to RGA and SCL3 competitively in the nucleus. In terms of tissue distribution, expressed in the ground tissue and stele cells of embryos and 2-days post-germination roots but not in the quiescent center. Detected only in cells that perform asymmetric cell divisions. In roots, present in cortex, endodermis, and pericycle layer.

Its subcellular location is the nucleus. In terms of biological role, transcription factor that regulates tissue boundaries and asymmetric cell division. Contributes to the sequestration of 'SHORT-ROOT' to the nucleus. Interacts with the SCR and MGP promoters. Does not show transcription activity by itself, but regulates the transcription of downstream genes through interaction with other transcription factors. Binds DNA via its zinc fingers. Recognizes and binds to SCL3 promoter sequence 5'-AGACAA-3' to promote its expression when in complex with RGA. Positively involved in gibberellic acid (GA) signaling. The sequence is that of Zinc finger protein MAGPIE from Arabidopsis thaliana (Mouse-ear cress).